A 165-amino-acid polypeptide reads, in one-letter code: Nucleotide-binding protein P9515_05441 (165 aa).

The protein belongs to the YajQ family.

In terms of biological role, nucleotide-binding protein. This Prochlorococcus marinus (strain MIT 9515) protein is Nucleotide-binding protein P9515_05441.